We begin with the raw amino-acid sequence, 905 residues long: V-type proton ATPase 116 kDa subunit a 1 (905 aa).

Residues 1–424 (MGDYVTPGEE…DAYGIATYRE (424 aa)) lie on the Cytoplasmic side of the membrane. The chain crosses the membrane as a helical span at residues 425-443 (INPAPYTMISFPFLFAVMF). Topologically, residues 444–445 (GD) are lumenal. A helical transmembrane segment spans residues 446–462 (MGHGAIMLLAALFFILK). Over 463–477 (EKQLEAARIKDEIFQ) the chain is Cytoplasmic. Residues 478-507 (TFFGGRYVIFLMGAFSIYTGFMYNDVFSKS) traverse the membrane as a helical segment. The Lumenal segment spans residues 508-572 (INTFGSSWQN…EGNKLSFLNS (65 aa)). The helical transmembrane segment at 573 to 592 (MKMKMSVLFGIAQMTFGVLL) threads the bilayer. At 593 to 610 (SYQNFIYFKSDLDIKYMF) the chain is on the cytoplasmic side. A helical transmembrane segment spans residues 611–631 (IPQMIFLSSIFIYLCIQILSK). The Lumenal segment spans residues 632–699 (WLFFGAVGGT…YPGQATIEII (68 aa)). A helical transmembrane segment spans residues 700-719 (LVVLALVQVPIMLFAKPYFL). At 720–788 (YRRDKQQSRY…DVMVYQAIHT (69 aa)) the chain is on the cytoplasmic side. The chain crosses the membrane as a helical span at residues 789–813 (IEFVLGCVSHTASYLRLWALSLAHA). The Lumenal portion of the chain corresponds to 814 to 834 (QLSDVLWTMVFRNAFVLDGYT). A helical membrane pass occupies residues 835-873 (GAIATYILFFIFGSLSVFILVLMEGLSAFLHALRLHWVE). Residues 874–905 (FQSKFYGGLGYEFAPFSFEKILAEEREAEENL) lie on the Cytoplasmic side of the membrane.

This sequence belongs to the V-ATPase 116 kDa subunit family. V-ATPase is a heteromultimeric enzyme made up of two complexes: the ATP-hydrolytic V1 complex and the proton translocation V0 complex. The V1 complex consists of three catalytic AB heterodimers that form a heterohexamer, three peripheral stalks each consisting of EG heterodimers, one central rotor including subunits D and F, and the regulatory subunits C and H. The proton translocation complex V0 consists of the proton transport subunit a, a ring of proteolipid subunits c9c'', rotary subunit d, subunits e and f, and the accessory subunits vah-19/Ac45 and vah-20/PRR. Interacts with V-type proton ATPase subunit C vha-11. Ubiquitous expression in embryos. Expressed in gonads, intestine, neurons in the head and motoneurons in the ventral cord of larvae and adults. Expressed in the vulvae and spermathecal uterine valves. Weakly expressed in the pharynx. As to expression, specifically expressed in the nervous system.

Its subcellular location is the membrane. Functionally, subunit of the V0 complex of vacuolar(H+)-ATPase (V-ATPase), a multisubunit enzyme composed of a peripheral complex (V1) that hydrolyzes ATP and a membrane integral complex (V0) that translocates protons. V-ATPase is responsible for acidifying and maintaining the pH of intracellular compartments and in some cell types, is targeted to the plasma membrane, where it is responsible for acidifying the extracellular environment. Required for assembly and activity of the vacuolar ATPase. Regulates the size of gut granules during embryonic development. In neurons, required for necrotic cell death by promoting intracellular acidification. Required for cell death induced by hypoxia. Required for acidification of synaptic vesicles and the release of neurotransmitters from adult neurons. The protein is V-type proton ATPase 116 kDa subunit a 1 of Caenorhabditis elegans.